The following is a 477-amino-acid chain: Ribulose bisphosphate carboxylase large chain (477 aa).

Residues 1 to 2 (MS) constitute a propeptide that is removed on maturation. Position 3 is an N-acetylproline (proline 3). An N6,N6,N6-trimethyllysine modification is found at lysine 14. Substrate is bound by residues asparagine 123 and threonine 173. The active-site Proton acceptor is the lysine 175. Lysine 177 provides a ligand contact to substrate. Mg(2+) contacts are provided by lysine 201, aspartate 203, and glutamate 204. Residue lysine 201 is modified to N6-carboxylysine. Histidine 294 functions as the Proton acceptor in the catalytic mechanism. Substrate is bound by residues arginine 295, histidine 327, and serine 379.

It belongs to the RuBisCO large chain family. Type I subfamily. In terms of assembly, heterohexadecamer of 8 large chains and 8 small chains; disulfide-linked. The disulfide link is formed within the large subunit homodimers. Mg(2+) is required as a cofactor. Post-translationally, the disulfide bond which can form in the large chain dimeric partners within the hexadecamer appears to be associated with oxidative stress and protein turnover.

It localises to the plastid. The protein localises to the chloroplast. It carries out the reaction 2 (2R)-3-phosphoglycerate + 2 H(+) = D-ribulose 1,5-bisphosphate + CO2 + H2O. It catalyses the reaction D-ribulose 1,5-bisphosphate + O2 = 2-phosphoglycolate + (2R)-3-phosphoglycerate + 2 H(+). Functionally, ruBisCO catalyzes two reactions: the carboxylation of D-ribulose 1,5-bisphosphate, the primary event in carbon dioxide fixation, as well as the oxidative fragmentation of the pentose substrate in the photorespiration process. Both reactions occur simultaneously and in competition at the same active site. The protein is Ribulose bisphosphate carboxylase large chain of Nicotiana tomentosiformis (Tobacco).